Reading from the N-terminus, the 257-residue chain is MSDDSWSVAGHTFKSRLIVGTGKYKDYAQNAAAVKAAGAEIVTVAVRRVNLTDTSAPMLTDYIDPKEYCFLPNTAGCFNAEEAVRTLRLAREAGGWTLVKLEVLGEARTLYPDMVETLKATEILVKEGFQPMVYCSDDPIMAKRLEDAGAVAIMPLGAPIGSGLGLQNPVMLRLIVEAANVPVLVDAGVGTASDAAVALELGCDAVLMNTAIAEAKNPVLMAQAMKSAVEAGRMAYLAGRMGKRMYADPSSPLAGLI.

K100 (schiff-base intermediate with DXP) is an active-site residue. 1-deoxy-D-xylulose 5-phosphate contacts are provided by residues G161, 187-188 (AG), and 209-210 (NT).

This sequence belongs to the ThiG family. As to quaternary structure, homotetramer. Forms heterodimers with either ThiH or ThiS.

It is found in the cytoplasm. It catalyses the reaction [ThiS sulfur-carrier protein]-C-terminal-Gly-aminoethanethioate + 2-iminoacetate + 1-deoxy-D-xylulose 5-phosphate = [ThiS sulfur-carrier protein]-C-terminal Gly-Gly + 2-[(2R,5Z)-2-carboxy-4-methylthiazol-5(2H)-ylidene]ethyl phosphate + 2 H2O + H(+). Its pathway is cofactor biosynthesis; thiamine diphosphate biosynthesis. In terms of biological role, catalyzes the rearrangement of 1-deoxy-D-xylulose 5-phosphate (DXP) to produce the thiazole phosphate moiety of thiamine. Sulfur is provided by the thiocarboxylate moiety of the carrier protein ThiS. In vitro, sulfur can be provided by H(2)S. The protein is Thiazole synthase of Zymomonas mobilis subsp. mobilis (strain ATCC 31821 / ZM4 / CP4).